The following is a 280-amino-acid chain: NAD(P)H-quinone oxidoreductase subunit K, chloroplastic (280 aa).

Residues Cys-65, Cys-66, Cys-130, and Cys-161 each coordinate [4Fe-4S] cluster. The disordered stretch occupies residues 257–280; the sequence is LLKDWKQSNQKQEQNVKMMKEEEA.

Belongs to the complex I 20 kDa subunit family. NDH is composed of at least 16 different subunits, 5 of which are encoded in the nucleus. [4Fe-4S] cluster is required as a cofactor.

It is found in the plastid. The protein resides in the chloroplast thylakoid membrane. It catalyses the reaction a plastoquinone + NADH + (n+1) H(+)(in) = a plastoquinol + NAD(+) + n H(+)(out). It carries out the reaction a plastoquinone + NADPH + (n+1) H(+)(in) = a plastoquinol + NADP(+) + n H(+)(out). In terms of biological role, NDH shuttles electrons from NAD(P)H:plastoquinone, via FMN and iron-sulfur (Fe-S) centers, to quinones in the photosynthetic chain and possibly in a chloroplast respiratory chain. The immediate electron acceptor for the enzyme in this species is believed to be plastoquinone. Couples the redox reaction to proton translocation, and thus conserves the redox energy in a proton gradient. The chain is NAD(P)H-quinone oxidoreductase subunit K, chloroplastic from Staurastrum punctulatum (Green alga).